Here is a 550-residue protein sequence, read N- to C-terminus: Sorting nexin-33 (550 aa).

One can recognise an SH3 domain in the interval 1–61 (MALKARALYS…PASYVEIQSS (61 aa)). Residues 62 to 152 (RSGSVQVDYS…QDSIASGKRG (91 aa)) are disordered. Over residues 86 to 102 (YDDDDEEDDDDWDDWDD) the composition is skewed to acidic residues. Over residues 128–144 (SRPEYSHRPRPALERQD) the composition is skewed to basic and acidic residues. The PX domain occupies 206–316 (FNCSVEEPTK…HFLGCQDEKQ (111 aa)). In terms of domain architecture, BAR spans 347–550 (LQDVEERVDV…EKTLHLYDEL (204 aa)).

This sequence belongs to the sorting nexin family.

The protein localises to the cytoplasm. It localises to the cytosol. It is found in the membrane. Its subcellular location is the cytoplasmic vesicle membrane. Functionally, plays a role in the reorganization of the cytoskeleton, endocytosis and cellular vesicle trafficking, both during interphase and at the end of mitotic cell divisions. Required for efficient progress through mitosis and cytokinesis. Required for normal formation of the cleavage furrow at the end of mitosis. Modulates endocytosis of cell-surface proteins. Promotes membrane tubulation (in vitro). May promote the formation of macropinosomes. The chain is Sorting nexin-33 (snx33) from Xenopus laevis (African clawed frog).